Reading from the N-terminus, the 381-residue chain is MELNSQFNAFLTNIRPTDPQKEDWKGGAKTLRERLNNYEPLKDIVVSTFLQGSIRRSTAIRPLNGKRPDVDIVVVTNLDHNQIAPQEAMDLFVPFLEKYYPEKWVPQGRSFGITLSYVELDLVITAIPASGEEKNLLEQLYRSESVLTVNSLEEQKDWRLNKSWKPSESGLFISNSANIQDAPLSEWKAHPLVLPDRDENKWGRTHPLAQIRWTAEKNRACNGHYINLVRAVKWWRQQNSDNLPKYPKGYPLEHLIGNALDDGTPSMGKGLVQLIDTFLSRWAYVYSLRSKPSLPDHGVEEHDVLARLSAEDFCLFYEGLEDAAIIARSALASQDPKESAELWRKLFGTKFPFPGPQGGDRSGGFTAPTQPAEPQKTGRFA.

Serine 53 and arginine 56 together coordinate GTP. Catalysis depends on residues aspartate 69 and aspartate 71. Mg(2+)-binding residues include aspartate 69 and aspartate 71. GTP is bound at residue arginine 109. Aspartate 121 is a catalytic residue. The Mg(2+) site is built by aspartate 121 and aspartate 196. Arginine 197, arginine 204, threonine 205, glutamine 210, and arginine 307 together coordinate GTP. The disordered stretch occupies residues 348–381; sequence GTKFPFPGPQGGDRSGGFTAPTQPAEPQKTGRFA.

It belongs to the CD-NTase family. D02 subfamily. It depends on Mg(2+) as a cofactor.

It carries out the reaction GTP + 2 ATP = 3',3',3'-cAAG + 3 diphosphate. In terms of biological role, cyclic nucleotide synthase (second messenger synthase) of a CBASS antivirus system. CBASS (cyclic oligonucleotide-based antiphage signaling system) provides immunity against bacteriophage. The CD-NTase protein synthesizes cyclic nucleotides in response to infection; these serve as specific second messenger signals. The signals activate a diverse range of effectors, leading to bacterial cell death and thus abortive phage infection. Its function is as follows. Cyclic nucleotide synthase, synthesizes a tricyclic nucleotide with AMP and GMP moieties, probably 3',3',3'-cyclic AMP-AMP-GMP (3'3'3'-cAAG). Controls the activity of the associated CBASS effector protein. This is Probable cyclic AMP-AMP-GMP nucleotide synthase from Salmonella paratyphi B (Salmonella enterica subsp. enterica serovar Paratyphi B).